A 555-amino-acid polypeptide reads, in one-letter code: Myo-inositol transporter 2 (555 aa).

The Cytoplasmic portion of the chain corresponds to 1 to 61 (MSSTLDTITP…NLVRAENEDK (61 aa)). Residues 62 to 82 (VTPYFMFLISVAAIAGFLFGY) form a helical membrane-spanning segment. At 83–108 (DTGIVGAALPMVGTSLGHTLSATESE) the chain is on the extracellular side. A helical transmembrane segment spans residues 109–129 (IITAGTTIGAIFGASILGTMA). The Cytoplasmic portion of the chain corresponds to 130-142 (DKLGRKWAMIISD). A helical transmembrane segment spans residues 143 to 163 (FAFTAGAIIIAASYSVPQIIV). Over 164-165 (GR) the chain is Extracellular. Residues 166 to 186 (LVLGVGVGGAAVIAPLYIAEL) form a helical membrane-spanning segment. The Cytoplasmic portion of the chain corresponds to 187–200 (APTAVRGRCVGANA). The helical transmembrane segment at 201-221 (FCIPFGQVVASAIGAGFQAGV) threads the bilayer. Over 222–228 (PYHIGWR) the chain is Extracellular. Residues 229-249 (VLFGLGVVPSVVQLCLMHFLP) traverse the membrane as a helical segment. Topologically, residues 250–328 (ESPRVLVLRG…AIISVSGVQA (79 aa)) are cytoplasmic. A helical transmembrane segment spans residues 329 to 349 (FGQLTGFNTLLYYSGTIFGLL). Residues 350-355 (GLKNGA) are Extracellular-facing. The helical transmembrane segment at 356–376 (AAGLIPSCLNALFVFIGMSIV) threads the bilayer. The Cytoplasmic portion of the chain corresponds to 377-385 (DKVGRRKLM). Residues 386 to 406 (ITFIPGMMIAFTWTIISFHFL) traverse the membrane as a helical segment. Topologically, residues 407 to 427 (TKPTGGLLLKDYQYSTPLVGS) are extracellular. Residues 428–448 (VLGSIVLFVIPFGLTYSHIIW) traverse the membrane as a helical segment. Residues 449–461 (YQSEFLPLEIRAA) are Cytoplasmic-facing. Residues 462-482 (GSAISTTACWLANLVVSVAYL) form a helical membrane-spanning segment. The Extracellular portion of the chain corresponds to 483 to 487 (TQLEK). Residues 488-508 (LGATGTYGLYLGFITIGYIFV) form a helical membrane-spanning segment. Topologically, residues 509–555 (YFCYPETKGLSIDETAEIFIDGFGIEKAHQMLREKRAFAAELYAGRA) are cytoplasmic.

It belongs to the major facilitator superfamily. Sugar transporter (TC 2.A.1.1) family.

It is found in the cell membrane. It catalyses the reaction myo-inositol(out) + H(+)(out) = myo-inositol(in) + H(+)(in). Functionally, transporter for myo-inositol. The chain is Myo-inositol transporter 2 from Cryptococcus neoformans var. grubii serotype A (strain H99 / ATCC 208821 / CBS 10515 / FGSC 9487) (Filobasidiella neoformans var. grubii).